The following is a 162-amino-acid chain: NADH-quinone oxidoreductase subunit I (162 aa).

4Fe-4S ferredoxin-type domains lie at 54-83 (RRYE…IESE) and 93-122 (TRYD…ETQI). C63, C66, C69, C73, C102, C105, C108, and C112 together coordinate [4Fe-4S] cluster.

It belongs to the complex I 23 kDa subunit family. NDH-1 is composed of 14 different subunits. Subunits NuoA, H, J, K, L, M, N constitute the membrane sector of the complex. It depends on [4Fe-4S] cluster as a cofactor.

It localises to the cell inner membrane. The enzyme catalyses a quinone + NADH + 5 H(+)(in) = a quinol + NAD(+) + 4 H(+)(out). NDH-1 shuttles electrons from NADH, via FMN and iron-sulfur (Fe-S) centers, to quinones in the respiratory chain. The immediate electron acceptor for the enzyme in this species is believed to be ubiquinone. Couples the redox reaction to proton translocation (for every two electrons transferred, four hydrogen ions are translocated across the cytoplasmic membrane), and thus conserves the redox energy in a proton gradient. This Burkholderia cenocepacia (strain ATCC BAA-245 / DSM 16553 / LMG 16656 / NCTC 13227 / J2315 / CF5610) (Burkholderia cepacia (strain J2315)) protein is NADH-quinone oxidoreductase subunit I.